The following is a 158-amino-acid chain: Small ribosomal subunit protein uS19 (158 aa).

Belongs to the universal ribosomal protein uS19 family.

Its function is as follows. Protein S19 forms a complex with S13 that binds strongly to the 16S ribosomal RNA. The protein is Small ribosomal subunit protein uS19 of Pyrobaculum neutrophilum (strain DSM 2338 / JCM 9278 / NBRC 100436 / V24Sta) (Thermoproteus neutrophilus).